Here is a 301-residue protein sequence, read N- to C-terminus: tRNA dimethylallyltransferase (301 aa).

9–16 (GPTASGKS) provides a ligand contact to ATP. A substrate-binding site is contributed by 11–16 (TASGKS). The interval 34–37 (DSMQ) is interaction with substrate tRNA.

This sequence belongs to the IPP transferase family. As to quaternary structure, monomer. Mg(2+) is required as a cofactor.

It carries out the reaction adenosine(37) in tRNA + dimethylallyl diphosphate = N(6)-dimethylallyladenosine(37) in tRNA + diphosphate. Catalyzes the transfer of a dimethylallyl group onto the adenine at position 37 in tRNAs that read codons beginning with uridine, leading to the formation of N6-(dimethylallyl)adenosine (i(6)A). The protein is tRNA dimethylallyltransferase of Corynebacterium efficiens (strain DSM 44549 / YS-314 / AJ 12310 / JCM 11189 / NBRC 100395).